The following is a 186-amino-acid chain: Interferon beta (186 aa).

The first 21 residues, 1 to 21 (MTGRCILQIALLVCFFTTAHS), serve as a signal peptide directing secretion. Tyr-24 carries the post-translational modification Phosphotyrosine. N-linked (GlcNAc...) asparagine glycans are attached at residues Asn-46, Asn-101, Asn-131, and Asn-136. Cys-52 and Cys-161 are disulfide-bonded.

The protein belongs to the alpha/beta interferon family. As to quaternary structure, monomer.

It localises to the secreted. Type I interferon cytokine that plays a key role in the innate immune response to infection, developing tumors and other inflammatory stimuli. Signals via binding to high-affinity (IFNAR2) and low-affinity (IFNAR1) heterodimeric receptor, activating the canonical Jak-STAT signaling pathway resulting in transcriptional activation or repression of interferon-regulated genes that encode the effectors of the interferon response, such as antiviral proteins, regulators of cell proliferation and differentiation, and immunoregulatory proteins. Signals mostly via binding to a IFNAR1-IFNAR2 heterodimeric receptor, but can also function with IFNAR1 alone and independently of Jak-STAT pathways. Elicits a wide variety of responses, including antiviral and antibacterial activities, and can regulate the development of B-cells, myelopoiesis and lipopolysaccharide (LPS)-inducible production of tumor necrosis factor. Plays a role in neuronal homeostasis by regulating dopamine turnover and protecting dopaminergic neurons: acts by promoting neuronal autophagy and alpha-synuclein clearance, thereby preventing dopaminergic neuron loss. IFNB1 is more potent than interferon-alpha (IFN-alpha) in inducing the apoptotic and antiproliferative pathways required for control of tumor cell growth. The polypeptide is Interferon beta (IFNB1) (Felis catus (Cat)).